The primary structure comprises 446 residues: Calcium-binding and coiled-coil domain-containing protein 2 (446 aa).

The short motif at isoleucine 133–valine 136 is the CLIR element. Residues threonine 137–methionine 349 are a coiled coil. The short motif at aspartate 203–glutamate 206 is the LIR-like element. Residues asparagine 371–serine 381 form an interaction with LGALS8 region. Positions lysine 395–leucine 446 are interaction with MYO6. A UBZ1-type zinc finger spans residues cysteine 419–histidine 444. Residues cysteine 422, cysteine 425, histidine 440, and histidine 444 each coordinate Zn(2+). Serine 445 is modified (phosphoserine).

The protein belongs to the CALCOCO family. In terms of assembly, dimer. Part of a complex consisting of CALCOCO2, TAX1BP1 and MYO6. Interacts with MYO6. Interacts with GEMIN4. Interacts with ATG8 family members MAP1LC3A, MAP1LC3B, GABARAP, GABARAPL1 and GABARAPL2. Interacts with ATG8 family member MAP1LC3C. Interacts with LGALS8. Interacts with TOM1; the interaction is indirect and is mediated by MYO6, which acts as a bridge between TOM1 and CALCOCO2. Interacts with AZI2.

The protein localises to the cytoplasm. It is found in the perinuclear region. The protein resides in the cytoskeleton. It localises to the cytoplasmic vesicle. Its subcellular location is the autophagosome membrane. In terms of biological role, xenophagy-specific receptor required for autophagy-mediated intracellular bacteria degradation. Acts as an effector protein of galectin-sensed membrane damage that restricts the proliferation of infecting pathogens upon entry into the cytosol by targeting LGALS8-associated bacteria for autophagy. Initially orchestrates bacteria targeting to autophagosomes and subsequently ensures pathogen degradation by regulating pathogen-containing autophagosome maturation. Bacteria targeting to autophagosomes relies on its interaction with MAP1LC3A, MAP1LC3B and/or GABARAPL2, whereas regulation of pathogen-containing autophagosome maturation requires the interaction with MAP3LC3C. May play a role in ruffle formation and actin cytoskeleton organization and seems to negatively regulate constitutive secretion. This chain is Calcium-binding and coiled-coil domain-containing protein 2, found in Pongo abelii (Sumatran orangutan).